The sequence spans 458 residues: Acetyl-CoA decarbonylase/synthase complex subunit gamma (458 aa).

The 59-residue stretch at 1 to 59 (MQVTAMDVYRLLPKTNCGKCNEASCMAFATKLIEKEVTLDDCPQLSGDERQKLENLLAP) folds into the 4Fe-4S domain. Residues C17, C20, C25, and C42 each contribute to the [4Fe-4S] cluster site.

As to quaternary structure, heterodimer of delta and gamma chains. The ACDS complex is made up of alpha, epsilon, beta, gamma and delta chains with a probable stoichiometry of (alpha(2)epsilon(2))(4)-beta(8)-(gamma(1)delta(1))(8). Requires corrinoid as cofactor. [4Fe-4S] cluster serves as cofactor.

It carries out the reaction 5,6,7,8-tetrahydrosarcinapterin + methyl-Co(III)-[corrinoid Fe-S protein] = 5-methyltetrahydrosarcinapterin + Co(I)-[corrinoid Fe-S protein] + H(+). Functionally, part of a complex that catalyzes the reversible cleavage of acetyl-CoA, allowing autotrophic growth from CO(2). The protein is Acetyl-CoA decarbonylase/synthase complex subunit gamma of Methanothermobacter thermautotrophicus (strain ATCC 29096 / DSM 1053 / JCM 10044 / NBRC 100330 / Delta H) (Methanobacterium thermoautotrophicum).